Consider the following 90-residue polypeptide: Mitochondrial import inner membrane translocase subunit Tim10-B (90 aa).

Positions 29–54 (CHKKCVPPHYKEAELSKGESVCLDRC) match the Twin CX3C motif motif. Intrachain disulfides connect cysteine 29–cysteine 54 and cysteine 33–cysteine 50.

The protein belongs to the small Tim family. As to quaternary structure, heterohexamer; composed of 3 copies of TIMM9 and 3 copies of TIMM10/TIM10A, named soluble 70 kDa complex. The complex forms a 6-bladed alpha-propeller structure and associates with the TIMM22 component of the TIM22 complex. Interacts with multi-pass transmembrane proteins in transit.

The protein localises to the mitochondrion inner membrane. Its function is as follows. Mitochondrial intermembrane chaperone that participates in the import and insertion of multi-pass transmembrane proteins into the mitochondrial inner membrane. May also be required for the transfer of beta-barrel precursors from the TOM complex to the sorting and assembly machinery (SAM complex) of the outer membrane. Acts as a chaperone-like protein that protects the hydrophobic precursors from aggregation and guide them through the mitochondrial intermembrane space. In Xenopus laevis (African clawed frog), this protein is Mitochondrial import inner membrane translocase subunit Tim10-B (timm10-b).